A 307-amino-acid polypeptide reads, in one-letter code: 2,4-diacetylphloroglucinol hydrolase (307 aa).

Positions 142, 173, 283, and 287 each coordinate Zn(2+).

This sequence belongs to the DAPG/phloretin hydrolase family. Requires Zn(2+) as cofactor.

The catalysed reaction is 2,4-diacetylphloroglucinol + H2O = 2-acetylphloroglucinol + acetate. Activity is strongly reduced by pyoluteorin, an antifungal compound produced by the bacterium. In terms of biological role, hydrolase that specifically degrades the potent antimicrobial compound 2,4-diacetylphloroglucinol (DAPG) to equimolar amounts of mildly toxic monoacetylphloroglucinol (MAPG) and acetate. Does not degrade other compounds with structures similar to DAPG, such as MAPG and triacetylphloroglucinol, suggesting strict substrate specificity. Degradation of DAPG to MAPG may provide an additional means of fine-tuning levels of this antibiotic or may help avoid accumulation of a metabolite that at high levels may become toxic to the producing bacterium. The sequence is that of 2,4-diacetylphloroglucinol hydrolase from Pseudomonas protegens (strain DSM 19095 / LMG 27888 / CFBP 6595 / CHA0).